The following is a 46-amino-acid chain: GTP cyclohydrolase 1 (46 aa).

C7 is a Zn(2+) binding site.

The protein belongs to the GTP cyclohydrolase I family. In terms of assembly, homomer.

The enzyme catalyses GTP + H2O = 7,8-dihydroneopterin 3'-triphosphate + formate + H(+). It participates in cofactor biosynthesis; 7,8-dihydroneopterin triphosphate biosynthesis; 7,8-dihydroneopterin triphosphate from GTP: step 1/1. The chain is GTP cyclohydrolase 1 (folE) from Bacillus pumilus (Bacillus mesentericus).